The sequence spans 185 residues: Fimbrial subunit type 1 (185 aa).

Residues Met1 to Ala22 form the signal peptide. Cys46 and Cys86 form a disulfide bridge.

The protein belongs to the fimbrial protein family.

The protein localises to the fimbrium. This is Fimbrial subunit type 1 from Salmonella typhimurium.